Consider the following 95-residue polypeptide: uncharacterized protein (95 aa).

The tract at residues Met-1–Thr-64 is disordered. Residues Lys-18–Ala-28 show a composition bias toward basic and acidic residues. The span at Thr-35–Asp-49 shows a compositional bias: polar residues.

This is an uncharacterized protein from Schizosaccharomyces pombe (strain 972 / ATCC 24843) (Fission yeast).